Consider the following 981-residue polypeptide: MAEGGAADLDTQRSDIATLLKTSLRKGDTWYLVDSRWFKQWKKYVGFDSWDKYQMGDQNVYPGPIDNSGLLKDGDAQSLKEHLIDELDYILLPTEGWNKLVSWYTLMEGQEPIARKVVEQGMFVKHCKVEVYLTELKLCENGNMNNVVTRRFSKADTIDTIEKEIRKIFNIPDEKEARLWNKYMSNTFEPLNKPDSTIQDAGLYQGQVLVIEQKNEDGTWPRGPSTPKSPGASNFSTLPKISPSSLSNNYNNINNRNVKNSNYCLPSYTAYKNYDYSEPGRNNEQPGLCGLSNLGNTCFMNSAIQCLSNTPPLTEYFLNDKYQEELNFDNPLGMRGEIAKSYAELIKQMWSGKFSYVTPRAFKTQVGRFAPQFSGYQQQDCQELLAFLLDGLHEDLNRIRKKPYIQLKDADGRPDKVVAEEAWENHLKRNDSIIVDIFHGLFKSTLVCPECAKISVTFDPFCYLTLPLPMKKERSLEVYLVRMDPLAKPMQYKVIVPKIGNILDLCTALSALSGVPADKMIVTDIYNHRFHRIFAVDENLSSIMERDDIYVFEININRAEDTEHVVIPVCLREKFRHSSYTHHTGSSLFGQPFLMAIPRNNTEDKLYNLLLLRMCRYVKMSTETEETDGHLRCCEDQNINGNGPNGLHEEGSPSEMETDEPDDESSQDQELPSENENSQSEDSVGGDNDSENGLCTEETCKGQLTGHKKRLFTFQFNNLGNNDINYIKDDTSHIRFDDRQLRLDERSFLALDWDPDLKKRYFDENAAEDFEKHESVEYKPPKRPFVKLKDCIELFTTKEKLGAEDPWYCPNCKEHQQATKKLDLWSLPPVLVVHLKRFSYSRYMRDKLDTLVDFPISDLDMSEFLINPNAGPCRYNLIAVSNHYGGMGGGHYTAFAKNKDDGKWYYFDDSSVSTASEDQIVSKAAYVLFYQRQDTFSGTGFFPLDRETKGASAATGIPLESDEDSNDNDNDLENENCMHTN.

The residue at position 2 (Ala-2) is an N-acetylalanine. Residues Ala-2 to Gly-223 are mediates interaction with SART3. Residues Ala-7–Val-118 enclose the DUSP domain. The tract at residues Glu-216–Thr-237 is disordered. Thr-226 carries the post-translational modification Phosphothreonine. Residues Thr-226–Thr-237 show a composition bias toward polar residues. Ser-229 and Ser-242 each carry phosphoserine. The USP domain occupies Cys-289 to Gln-933. Cys-298 acts as the Nucleophile in catalysis. The residue at position 602 (Thr-602) is a Phosphothreonine. Residues Cys-633–Leu-694 are disordered. The span at Met-656 to Ser-673 shows a compositional bias: acidic residues. The active-site Proton acceptor is His-891. The segment at Ser-952 to Asn-981 is disordered. Acidic residues predominate over residues Glu-960–Asn-974. Phosphoserine occurs at positions 961 and 965.

It belongs to the peptidase C19 family. A homodimer structure has been reported; however it is unclear whether the protein form a homodimer in vivo. Identified in a complex with the COP9 signalosome complex (CSN). Interacts with SMAD1, SMAD2 and SMAD3; the interaction is direct. Forms a complex with SMURF2 and SMAD7. Interacts with TGFBR1. Interacts with SART3; the interaction is direct. May interact with RNF20 and RNF40. May interact with PRKN. Interacts with INCA1. In terms of processing, phosphorylated. Phosphorylation protects against ubiquitination and subsequent degradation by the proteasome. Ubiquitinated, leading to degradation by the proteasome. Widely expressed with highest levels in the brain and spleen, and lowest levels in the muscles (at protein level). In the midbrain, strong expression in neurons including the dopaminergic neurons (at protein level). Widely expressed with highest levels in testis, heart and liver.

It is found in the cytoplasm. It localises to the nucleus. Its subcellular location is the mitochondrion. The enzyme catalyses Thiol-dependent hydrolysis of ester, thioester, amide, peptide and isopeptide bonds formed by the C-terminal Gly of ubiquitin (a 76-residue protein attached to proteins as an intracellular targeting signal).. Hydrolase that removes conjugated ubiquitin from target proteins and regulates various pathways such as the TGF-beta receptor signaling, NF-kappa-B and RNF41/NRDP1-PRKN pathways. Acts as a key regulator of TGF-beta receptor signaling pathway, but the precise mechanism is still unclear: according to a report, acts by promoting deubiquitination of monoubiquitinated R-SMADs (SMAD1, SMAD2 and/or SMAD3), thereby alleviating inhibition of R-SMADs and promoting activation of TGF-beta target genes. According to another reports, regulates the TGF-beta receptor signaling pathway by mediating deubiquitination and stabilization of TGFBR1, leading to an enhanced TGF-beta signal. Able to mediate deubiquitination of monoubiquitinated substrates, 'Lys-27'-, 'Lys-48'- and 'Lys-63'-linked polyubiquitin chains. May also regulate gene expression and/or DNA repair through the deubiquitination of histone H2B. Acts as an inhibitor of mitophagy by counteracting the action of parkin (PRKN): hydrolyzes cleavage of 'Lys-48'- and 'Lys-63'-linked polyubiquitin chains attached by parkin on target proteins such as MFN2, thereby reducing parkin's ability to drive mitophagy. Acts as an associated component of COP9 signalosome complex (CSN) and regulates different pathways via this association: regulates NF-kappa-B by mediating deubiquitination of NFKBIA and deubiquitinates substrates bound to VCP. Involved in endosome organization by mediating deubiquitination of SQSTM1: ubiquitinated SQSTM1 forms a molecular bridge that restrains cognate vesicles in the perinuclear region and its deubiquitination releases target vesicles for fast transport into the cell periphery. Acts as a negative regulator of antifungal immunity by mediating 'Lys-27'-linked deubiquitination of CARD9, thereby inactivating CARD9. This chain is Ubiquitin carboxyl-terminal hydrolase 15 (Usp15), found in Mus musculus (Mouse).